We begin with the raw amino-acid sequence, 212 residues long: ATP phosphoribosyltransferase (212 aa).

Belongs to the ATP phosphoribosyltransferase family. Short subfamily. Heteromultimer composed of HisG and HisZ subunits.

The protein resides in the cytoplasm. It catalyses the reaction 1-(5-phospho-beta-D-ribosyl)-ATP + diphosphate = 5-phospho-alpha-D-ribose 1-diphosphate + ATP. Its pathway is amino-acid biosynthesis; L-histidine biosynthesis; L-histidine from 5-phospho-alpha-D-ribose 1-diphosphate: step 1/9. In terms of biological role, catalyzes the condensation of ATP and 5-phosphoribose 1-diphosphate to form N'-(5'-phosphoribosyl)-ATP (PR-ATP). Has a crucial role in the pathway because the rate of histidine biosynthesis seems to be controlled primarily by regulation of HisG enzymatic activity. This Prochlorococcus marinus (strain MIT 9301) protein is ATP phosphoribosyltransferase.